We begin with the raw amino-acid sequence, 299 residues long: Small ribosomal subunit protein uS2 (299 aa).

The tract at residues 227–299 (SERKSEKSTK…DKAKASNEEE (73 aa)) is disordered.

This sequence belongs to the universal ribosomal protein uS2 family.

This Christiangramia forsetii (strain DSM 17595 / CGMCC 1.15422 / KT0803) (Gramella forsetii) protein is Small ribosomal subunit protein uS2.